A 312-amino-acid polypeptide reads, in one-letter code: DNA-directed RNA polymerase subunit alpha (312 aa).

The interval 1–226 (MIEFEKPIIT…EHLNLFTDLT (226 aa)) is alpha N-terminal domain (alpha-NTD). The segment at 243-312 (DEKVLDRTIE…DLGLGLKNDK (70 aa)) is alpha C-terminal domain (alpha-CTD).

This sequence belongs to the RNA polymerase alpha chain family. Homodimer. The RNAP catalytic core consists of 2 alpha, 1 beta, 1 beta' and 1 omega subunit. When a sigma factor is associated with the core the holoenzyme is formed, which can initiate transcription.

The catalysed reaction is RNA(n) + a ribonucleoside 5'-triphosphate = RNA(n+1) + diphosphate. In terms of biological role, DNA-dependent RNA polymerase catalyzes the transcription of DNA into RNA using the four ribonucleoside triphosphates as substrates. The protein is DNA-directed RNA polymerase subunit alpha of Streptococcus pyogenes serotype M3 (strain ATCC BAA-595 / MGAS315).